Consider the following 373-residue polypeptide: GTPase Obg (373 aa).

The Obg domain occupies 1–159 (MKFIDEARIE…RMVRLELKVL (159 aa)). The tract at residues 128–147 (LHFKSSTNRAPRQKTDGKPG) is disordered. One can recognise an OBG-type G domain in the interval 160–334 (ADVGLLGMPN…LCYAVFDHIS (175 aa)). GTP-binding positions include 166 to 173 (GMPNAGKS), 191 to 195 (FTTLA), 213 to 216 (DIPG), 284 to 287 (NKLD), and 315 to 317 (SAL). Mg(2+) contacts are provided by Ser-173 and Thr-193. A disordered region spans residues 354 to 373 (FREKPQAPAAADDAGTDPQV). Over residues 359–373 (QAPAAADDAGTDPQV) the composition is skewed to low complexity.

This sequence belongs to the TRAFAC class OBG-HflX-like GTPase superfamily. OBG GTPase family. As to quaternary structure, monomer. Mg(2+) serves as cofactor.

It is found in the cytoplasm. An essential GTPase which binds GTP, GDP and possibly (p)ppGpp with moderate affinity, with high nucleotide exchange rates and a fairly low GTP hydrolysis rate. Plays a role in control of the cell cycle, stress response, ribosome biogenesis and in those bacteria that undergo differentiation, in morphogenesis control. This is GTPase Obg from Paraburkholderia phytofirmans (strain DSM 17436 / LMG 22146 / PsJN) (Burkholderia phytofirmans).